The following is a 193-amino-acid chain: Large ribosomal subunit protein eL18 (193 aa).

The interval 158–193 is disordered; sequence HFGAAGVPGSHAKPFTSNRGKERQRSSARRRAFRHK. Residues 183 to 193 show a composition bias toward basic residues; the sequence is SSARRRAFRHK.

This sequence belongs to the eukaryotic ribosomal protein eL18 family.

It localises to the cytoplasm. This Trypanosoma cruzi (strain CL Brener) protein is Large ribosomal subunit protein eL18 (RPL18).